Consider the following 339-residue polypeptide: UDP-N-acetylenolpyruvoylglucosamine reductase (339 aa).

The FAD-binding PCMH-type domain occupies 19–189; that stretch reads VDVRAQLFAE…LRVRFALNRV (171 aa). Residue arginine 166 is part of the active site. The active-site Proton donor is serine 239. The active site involves glutamate 335.

This sequence belongs to the MurB family. It depends on FAD as a cofactor.

The protein resides in the cytoplasm. The catalysed reaction is UDP-N-acetyl-alpha-D-muramate + NADP(+) = UDP-N-acetyl-3-O-(1-carboxyvinyl)-alpha-D-glucosamine + NADPH + H(+). It functions in the pathway cell wall biogenesis; peptidoglycan biosynthesis. Cell wall formation. The chain is UDP-N-acetylenolpyruvoylglucosamine reductase from Pseudomonas fluorescens (strain Pf0-1).